The following is a 48-amino-acid chain: Small polypeptide DEVIL 22 (48 aa).

Residues 7-23 (KLNKGHAFTSKCASLVK) traverse the membrane as a helical segment. Residues 13 to 44 (AFTSKCASLVKEQRARLYILRRCATMLCCWYI) form a required for DVL/RTFL small polypeptide activity region.

Belongs to the DVL/RTFL small polypeptides family.

The protein resides in the cell membrane. Its function is as follows. Small polypeptide acting as a regulatory molecule which coordinates cellular responses required for differentiation, growth and development, probably by restricting polar cell proliferation in lateral organs and coordinating socket cell recruitment and differentiation at trichome sites. The chain is Small polypeptide DEVIL 22 from Arabidopsis thaliana (Mouse-ear cress).